Consider the following 503-residue polypeptide: Xylan O-acetyltransferase 12 (503 aa).

Residues 1–54 (MWSALFSHLREVHKRSGVKEEKLIMKSPAAAGEAAGCHKPQATATNKMTVLQSP) are Cytoplasmic-facing. Residues 55-77 (LGLRTILTSLVAFFIVVSSVSLL) form a helical; Signal-anchor for type II membrane protein membrane-spanning segment. Residues 78–503 (FDRSQDAQAQ…EFLYAYLMHK (426 aa)) are Lumenal-facing. Intrachain disulfides connect Cys-153-Cys-204, Cys-175-Cys-240, Cys-184-Cys-484, and Cys-400-Cys-480. Asn-154, Asn-164, Asn-190, and Asn-210 each carry an N-linked (GlcNAc...) asparagine glycan. Positions 227 to 229 (GDS) match the GDS motif motif. The active-site Nucleophile is the Ser-229. N-linked (GlcNAc...) asparagine glycosylation is found at Asn-256, Asn-268, Asn-373, Asn-402, and Asn-443. Asp-479 acts as the Proton donor in catalysis. Positions 479-482 (DCTH) match the DXXH motif motif. His-482 (proton acceptor) is an active-site residue.

This sequence belongs to the PC-esterase family. TBL subfamily.

It localises to the golgi apparatus membrane. In terms of biological role, xylan acetyltransferase required for 2-O- and 3-O-monoacetylation of xylosyl residues in xylan. Catalyzes the 2-O-acetylation of xylan, followed by nonenzymatic acetyl migration to the O-3 position, resulting in products that are monoacetylated at both O-2 and O-3 positions. In Oryza sativa subsp. japonica (Rice), this protein is Xylan O-acetyltransferase 12.